The sequence spans 792 residues: Kinesin-like protein KIFC2 (792 aa).

2 disordered regions span residues 22–45 and 142–184; these read AAAV…RRRP and QGTQ…QEHQ. A compositionally biased stretch (polar residues) spans 142–169; the sequence is QGTQPTCPVQPSTLDGSLSQEESSSQPT. Residues 186–347 are a coiled coil; that stretch reads LQLEEEQRVW…ARMASLRQGC (162 aa). The Kinesin motor domain maps to 409–732; that stretch reads NIRVLCRLRP…LKFAERVGQV (324 aa). 486–493 lines the ATP pocket; that stretch reads GQTGTGKT. Residues 734 to 792 form a disordered region; it reads LGPARRRRAPRSGTPSSLSTDTPLTGTSCTPTPSPGSPPSTSPNSCSGLTLEPPGDPPP. Low complexity predominate over residues 744-764; the sequence is RSGTPSSLSTDTPLTGTSCTP. Positions 765–774 are enriched in pro residues; sequence TPSPGSPPST.

This sequence belongs to the TRAFAC class myosin-kinesin ATPase superfamily. Kinesin family. As to expression, present in axons and dendrites of neurons in the central and peripheral nervous systems.

The protein localises to the cytoplasm. Its subcellular location is the cytoskeleton. Its function is as follows. May play a role in microtubule-dependent retrograde axonal transport. May function as the motor for the transport of multivesicular body (MVB)-like organelles in dendrites. In Mus musculus (Mouse), this protein is Kinesin-like protein KIFC2 (Kifc2).